Consider the following 334-residue polypeptide: D-aspartate oxidase 1 (334 aa).

FAD contacts are provided by Asp-35, Arg-36, Ser-43, Gly-307, and Thr-312. The Microbody targeting signal motif lies at 332-334 (SKL).

Belongs to the DAMOX/DASOX family. FAD is required as a cofactor. In terms of tissue distribution, expressed in the intestinal cells, hypodermis and in unidentified cells in the head in adult hermaphrodites.

The protein localises to the peroxisome matrix. It carries out the reaction D-aspartate + O2 + H2O = oxaloacetate + H2O2 + NH4(+). The enzyme catalyses D-glutamate + O2 + H2O = H2O2 + 2-oxoglutarate + NH4(+). With respect to regulation, not inhibited by potassium bromide or thiolactomycin. Its function is as follows. Selectively catalyzes the oxidative deamination of acidic amino acids. May play a role in the egg-laying events and early development of the worm, in addition to quality control of the germ cells. This chain is D-aspartate oxidase 1 (ddo-1), found in Caenorhabditis elegans.